The following is a 444-amino-acid chain: F-box protein At1g53790 (444 aa).

An F-box domain is found at 76 to 125 (VSCFRYIPIDLLMDIFSRVPAKSIARFRCVSKLWESILCRPDFKELFMTM).

The chain is F-box protein At1g53790 from Arabidopsis thaliana (Mouse-ear cress).